The chain runs to 311 residues: Pyrimidine-specific ribonucleoside hydrolase RihA (311 aa).

His240 is an active-site residue.

It belongs to the IUNH family. RihA subfamily.

Hydrolyzes with equal efficiency cytidine or uridine to ribose and cytosine or uracil, respectively. The sequence is that of Pyrimidine-specific ribonucleoside hydrolase RihA from Escherichia fergusonii (strain ATCC 35469 / DSM 13698 / CCUG 18766 / IAM 14443 / JCM 21226 / LMG 7866 / NBRC 102419 / NCTC 12128 / CDC 0568-73).